The primary structure comprises 101 residues: uncharacterized protein (101 aa).

2 consecutive transmembrane segments (helical) span residues Ile-3–Phe-23 and Val-68–Ile-88.

The protein resides in the cell membrane. This is an uncharacterized protein from Ureaplasma parvum serovar 3 (strain ATCC 700970).